A 245-amino-acid chain; its full sequence is Probable phosphatase YcdX (245 aa).

Zn(2+) is bound by residues His-7, His-9, His-15, His-40, Glu-73, His-101, His-131, Asp-192, and His-194.

It belongs to the PHP family. As to quaternary structure, homotrimer. The cofactor is Zn(2+).

The polypeptide is Probable phosphatase YcdX (Escherichia coli O81 (strain ED1a)).